The sequence spans 88 residues: Large ribosomal subunit protein bL27 (88 aa).

Residues 1–21 form a disordered region; sequence MAHKKGASSSRNGRDSNAKRL.

The protein belongs to the bacterial ribosomal protein bL27 family.

This chain is Large ribosomal subunit protein bL27, found in Thermobifida fusca (strain YX).